The sequence spans 298 residues: Homoserine kinase (298 aa).

Position 92–102 (92–102) interacts with ATP; it reads PLARGLGSSAT.

This sequence belongs to the GHMP kinase family. Homoserine kinase subfamily.

Its subcellular location is the cytoplasm. The catalysed reaction is L-homoserine + ATP = O-phospho-L-homoserine + ADP + H(+). It functions in the pathway amino-acid biosynthesis; L-threonine biosynthesis; L-threonine from L-aspartate: step 4/5. In terms of biological role, catalyzes the ATP-dependent phosphorylation of L-homoserine to L-homoserine phosphate. This is Homoserine kinase (thrB) from Nostoc sp. (strain PCC 7120 / SAG 25.82 / UTEX 2576).